Consider the following 342-residue polypeptide: ATP-dependent (S)-NAD(P)H-hydrate dehydratase (342 aa).

In terms of domain architecture, YjeF C-terminal spans 11–337 (ILPALEKVVP…EYLGHRLFTF (327 aa)). (6S)-NADPHX-binding positions include glycine 127 and 180–186 (NVMEHKR). ATP is bound by residues 229-233 (KGKTD) and 248-257 (GSPRRCGGQG). Aspartate 258 is a binding site for (6S)-NADPHX.

Belongs to the NnrD/CARKD family. Mg(2+) serves as cofactor.

The catalysed reaction is (6S)-NADHX + ATP = ADP + phosphate + NADH + H(+). It catalyses the reaction (6S)-NADPHX + ATP = ADP + phosphate + NADPH + H(+). Catalyzes the dehydration of the S-form of NAD(P)HX at the expense of ATP, which is converted to ADP. Together with NAD(P)HX epimerase, which catalyzes the epimerization of the S- and R-forms, the enzyme allows the repair of both epimers of NAD(P)HX, a damaged form of NAD(P)H that is a result of enzymatic or heat-dependent hydration. The sequence is that of ATP-dependent (S)-NAD(P)H-hydrate dehydratase from Physcomitrium patens (Spreading-leaved earth moss).